A 69-amino-acid polypeptide reads, in one-letter code: Toxin Lc b (69 aa).

Intrachain disulfides connect cysteine 3-cysteine 20, cysteine 13-cysteine 41, cysteine 45-cysteine 56, and cysteine 57-cysteine 62.

It belongs to the three-finger toxin family. Long-chain subfamily. Type II alpha-neurotoxin sub-subfamily. Expressed by the venom gland.

It is found in the secreted. In terms of biological role, binds with high affinity to muscular nicotinic acetylcholine receptors (nAChRs), whereas it binds with a low affinity to neuronal alpha-7/CHRNA7 nAChRs. This chain is Toxin Lc b, found in Laticauda colubrina (Yellow-lipped sea krait).